The primary structure comprises 351 residues: Cytoplasmic dynein 2 light intermediate chain 1 (351 aa).

The disordered stretch occupies residues 304–335; that stretch reads TLKAIQDPARDPQYAESEVDEMRVQKDQELEQ. A compositionally biased stretch (basic and acidic residues) spans 323–335; that stretch reads DEMRVQKDQELEQ.

The protein belongs to the dynein light intermediate chain family. In terms of assembly, light intermediate chain of the cytoplasmic dynein complex 2, a multisubunit complex composed at least of eleven different proteins. The cytoplasmic dynein 2 complex consists of two catalytic heavy chains (HCs) and a number of non-catalytic subunits presented by intermediate chains (ICs), light intermediate chains (LICs) and light chains (LCs). Among them, a heavy chain (DYNC2H1), two intermediate chains (DYNC2I2 and DYNC2I1), a light intermediate chain (DYNC2LI1), and a light chain (DYNLT2B) are unique to the dynein-2 complex, but a subset of light chains are also shared by dynein-1 and dynein-2 complexes. Dynein-2 complex is built around two copies of cytoplasmic dynein 2 heavy chain 1 (DYNC2H1). The C-terminal region forms the motor domain, which converts the energy from ATP hydrolysis into movement. Its N-terminal region forms the tail, an extended structure that binds the other subunits and holds the two heavy chains in a homodimer. Interacts with DYNC2H1 (via N-terminus); this interaction stabilizes the dynein-2 complex structure.

It localises to the cytoplasm. The protein resides in the cell projection. Its subcellular location is the cilium. It is found in the cytoskeleton. The protein localises to the cilium basal body. It localises to the cilium axoneme. The protein resides in the microtubule organizing center. Its subcellular location is the centrosome. Functionally, acts as one of several non-catalytic accessory components of the cytoplasmic dynein 2 complex (dynein-2 complex), a motor protein complex that drives the movement of cargos along microtubules within cilia and flagella in concert with the intraflagellar transport (IFT) system, facilitating the assembly of these organelles. Involved in the regulation of ciliary length. The chain is Cytoplasmic dynein 2 light intermediate chain 1 (Dync2li1) from Rattus norvegicus (Rat).